Here is a 315-residue protein sequence, read N- to C-terminus: L-lactate dehydrogenase (315 aa).

NAD(+) contacts are provided by Val-14, Asp-35, and Tyr-66. Substrate contacts are provided by residues Gln-83, Arg-89, and 121–124; that span reads NPVD. Residues 119 to 121 and Ser-144 each bind NAD(+); that span reads VAN. 149-152 contacts substrate; sequence DTAR. The active-site Proton acceptor is His-176. At Tyr-221 the chain carries Phosphotyrosine. Residue Thr-230 participates in substrate binding.

It belongs to the LDH/MDH superfamily. LDH family. In terms of assembly, homotetramer.

It localises to the cytoplasm. The catalysed reaction is (S)-lactate + NAD(+) = pyruvate + NADH + H(+). The protein operates within fermentation; pyruvate fermentation to lactate; (S)-lactate from pyruvate: step 1/1. Its function is as follows. Catalyzes the conversion of lactate to pyruvate. This chain is L-lactate dehydrogenase, found in Mesomycoplasma hyopneumoniae (strain 7448) (Mycoplasma hyopneumoniae).